The chain runs to 82 residues: Cytochrome b-c1 complex subunit 8 (82 aa).

Residues Met-1 to Leu-39 lie on the Mitochondrial matrix side of the membrane. Ser-16 is subject to Phosphoserine. Lys-33 is subject to N6-acetyllysine; alternate. Lys-33 carries the post-translational modification N6-succinyllysine; alternate. A helical transmembrane segment spans residues Arg-40–Glu-68. The Mitochondrial intermembrane portion of the chain corresponds to Arg-69–Lys-82.

The protein belongs to the UQCRQ/QCR8 family. Component of the ubiquinol-cytochrome c oxidoreductase (cytochrome b-c1 complex, complex III, CIII), a multisubunit enzyme composed of 11 subunits. The complex is composed of 3 respiratory subunits cytochrome b, cytochrome c1 and Rieske protein UQCRFS1, 2 core protein subunits UQCRC1/QCR1 and UQCRC2/QCR2, and 6 low-molecular weight protein subunits UQCRH/QCR6, UQCRB/QCR7, UQCRQ/QCR8, UQCR10/QCR9, UQCR11/QCR10 and subunit 9, the cleavage product of Rieske protein UQCRFS1. The complex exists as an obligatory dimer and forms supercomplexes (SCs) in the inner mitochondrial membrane with NADH-ubiquinone oxidoreductase (complex I, CI) and cytochrome c oxidase (complex IV, CIV), resulting in different assemblies (supercomplex SCI(1)III(2)IV(1) and megacomplex MCI(2)III(2)IV(2)). Interacts with UQCC6.

It localises to the mitochondrion inner membrane. Its function is as follows. Component of the ubiquinol-cytochrome c oxidoreductase, a multisubunit transmembrane complex that is part of the mitochondrial electron transport chain which drives oxidative phosphorylation. The respiratory chain contains 3 multisubunit complexes succinate dehydrogenase (complex II, CII), ubiquinol-cytochrome c oxidoreductase (cytochrome b-c1 complex, complex III, CIII) and cytochrome c oxidase (complex IV, CIV), that cooperate to transfer electrons derived from NADH and succinate to molecular oxygen, creating an electrochemical gradient over the inner membrane that drives transmembrane transport and the ATP synthase. The cytochrome b-c1 complex catalyzes electron transfer from ubiquinol to cytochrome c, linking this redox reaction to translocation of protons across the mitochondrial inner membrane, with protons being carried across the membrane as hydrogens on the quinol. In the process called Q cycle, 2 protons are consumed from the matrix, 4 protons are released into the intermembrane space and 2 electrons are passed to cytochrome c. The sequence is that of Cytochrome b-c1 complex subunit 8 (UQCRQ) from Pongo abelii (Sumatran orangutan).